We begin with the raw amino-acid sequence, 415 residues long: L-cysteine:1D-myo-inositol 2-amino-2-deoxy-alpha-D-glucopyranoside ligase (415 aa).

Cysteine 43 contacts Zn(2+). L-cysteinyl-5'-AMP contacts are provided by residues cysteine 43–threonine 46, threonine 58, and asparagine 81–threonine 83. Positions isoleucine 45–histidine 55 match the 'HIGH' region motif. The 'ERGGDP' region signature appears at glutamate 187–proline 192. Tryptophan 227 contributes to the L-cysteinyl-5'-AMP binding site. Position 231 (cysteine 231) interacts with Zn(2+). Glycine 249 to aspartate 251 is an L-cysteinyl-5'-AMP binding site. A Zn(2+)-binding site is contributed by histidine 256. Isoleucine 283 provides a ligand contact to L-cysteinyl-5'-AMP. Positions lysine 289 to serine 293 match the 'KMSKS' region motif.

It belongs to the class-I aminoacyl-tRNA synthetase family. MshC subfamily. Monomer. The cofactor is Zn(2+).

It carries out the reaction 1D-myo-inositol 2-amino-2-deoxy-alpha-D-glucopyranoside + L-cysteine + ATP = 1D-myo-inositol 2-(L-cysteinylamino)-2-deoxy-alpha-D-glucopyranoside + AMP + diphosphate + H(+). Its function is as follows. Catalyzes the ATP-dependent condensation of GlcN-Ins and L-cysteine to form L-Cys-GlcN-Ins. The protein is L-cysteine:1D-myo-inositol 2-amino-2-deoxy-alpha-D-glucopyranoside ligase of Saccharomonospora viridis (strain ATCC 15386 / DSM 43017 / JCM 3036 / CCUG 5913 / NBRC 12207 / NCIMB 9602 / P101) (Thermoactinomyces viridis).